The sequence spans 387 residues: Mannitol-1-phosphate 5-dehydrogenase (387 aa).

3-14 (AVHFGAGNIGRG) is an NAD(+) binding site.

This sequence belongs to the mannitol dehydrogenase family.

It carries out the reaction D-mannitol 1-phosphate + NAD(+) = beta-D-fructose 6-phosphate + NADH + H(+). This chain is Mannitol-1-phosphate 5-dehydrogenase, found in Pseudarthrobacter chlorophenolicus (strain ATCC 700700 / DSM 12829 / CIP 107037 / JCM 12360 / KCTC 9906 / NCIMB 13794 / A6) (Arthrobacter chlorophenolicus).